The chain runs to 649 residues: Acetyl-coenzyme A synthetase (649 aa).

Residues 190-193 and Thr-310 contribute to the CoA site; that span reads RGGR. ATP-binding positions include 386 to 388, 410 to 415, Asp-499, and Arg-514; these read GEP and DTWWQT. Residue Ser-522 coordinates CoA. An ATP-binding site is contributed by Arg-525. Residues Val-536, His-538, and Val-541 each coordinate Mg(2+). CoA is bound at residue Arg-583. Position 608 is an N6-acetyllysine (Lys-608).

It belongs to the ATP-dependent AMP-binding enzyme family. Mg(2+) is required as a cofactor. In terms of processing, acetylated. Deacetylation by the SIR2-homolog deacetylase activates the enzyme.

The enzyme catalyses acetate + ATP + CoA = acetyl-CoA + AMP + diphosphate. In terms of biological role, catalyzes the conversion of acetate into acetyl-CoA (AcCoA), an essential intermediate at the junction of anabolic and catabolic pathways. AcsA undergoes a two-step reaction. In the first half reaction, AcsA combines acetate with ATP to form acetyl-adenylate (AcAMP) intermediate. In the second half reaction, it can then transfer the acetyl group from AcAMP to the sulfhydryl group of CoA, forming the product AcCoA. In Methylorubrum extorquens (strain PA1) (Methylobacterium extorquens), this protein is Acetyl-coenzyme A synthetase.